Here is a 169-residue protein sequence, read N- to C-terminus: Peptide deformylase (169 aa).

2 residues coordinate Fe cation: Cys-91 and His-133. Residue Glu-134 is part of the active site. His-137 is a binding site for Fe cation.

The protein belongs to the polypeptide deformylase family. Requires Fe(2+) as cofactor.

It carries out the reaction N-terminal N-formyl-L-methionyl-[peptide] + H2O = N-terminal L-methionyl-[peptide] + formate. Its function is as follows. Removes the formyl group from the N-terminal Met of newly synthesized proteins. Requires at least a dipeptide for an efficient rate of reaction. N-terminal L-methionine is a prerequisite for activity but the enzyme has broad specificity at other positions. This Serratia proteamaculans (strain 568) protein is Peptide deformylase.